The following is a 306-amino-acid chain: Ribonuclease Z (306 aa).

Residues His63, His65, Asp67, His68, His141, Asp211, and His269 each coordinate Zn(2+). Asp67 acts as the Proton acceptor in catalysis.

It belongs to the RNase Z family. As to quaternary structure, homodimer. Zn(2+) is required as a cofactor.

It carries out the reaction Endonucleolytic cleavage of RNA, removing extra 3' nucleotides from tRNA precursor, generating 3' termini of tRNAs. A 3'-hydroxy group is left at the tRNA terminus and a 5'-phosphoryl group is left at the trailer molecule.. Functionally, zinc phosphodiesterase, which displays some tRNA 3'-processing endonuclease activity. Probably involved in tRNA maturation, by removing a 3'-trailer from precursor tRNA. This is Ribonuclease Z from Staphylococcus aureus (strain bovine RF122 / ET3-1).